A 1425-amino-acid polypeptide reads, in one-letter code: Nephrocystin-4 (1425 aa).

Serine 145 is subject to Phosphoserine. Residues 448 to 554 (FSLSSDGPTE…VSHLEADLSQ (107 aa)) form a disordered region. Low complexity-rich tracts occupy residues 473–484 (PASPSGTPAPAA) and 507–530 (SPLSPALQSSSKPPLQPPDSSQSP). A sufficient for basal bodies localization region spans residues 822–1425 (LTLANVGHAC…ETFCVKVLYQ (604 aa)).

The protein belongs to the NPHP4 family. In terms of assembly, interacts with NPHP1 and RPGRIP1L/NPHP8; NPHP1, NPHP4 and RPGRIP1L are proposed to form a functional NPHP1-4-8 module localized to cell-cell contacts and the ciliary transition zone; NPHP4 mediates the interaction between NPHP1 and RPGRIP1L. Interacts with IQCB1/NPHP5; the interaction likely requires additional interactors. Interacts with RPGRIP1, CEP164, JADE1, PALS1, INADL, PARD6A, INVS, DVL2. Interacts with INTU; INTU mediates the interaction between NPHP4 and DAAM1. Interacts with JADE1. Interacts with SPATA7. In terms of tissue distribution, expressed in the retina (at protein level).

It localises to the cytoplasm. The protein resides in the cytoskeleton. Its subcellular location is the cilium basal body. The protein localises to the microtubule organizing center. It is found in the centrosome. It localises to the cell junction. The protein resides in the tight junction. In terms of biological role, involved in the organization of apical junctions; the function is proposed to implicate a NPHP1-4-8 module. Does not seem to be strictly required for ciliogenesis. Required for building functional cilia. Involved in the organization of the subapical actin network in multiciliated epithelial cells. Seems to recruit INT to basal bodies of motile cilia which subsequently interacts with actin-modifying proteins such as DAAM1. In cooperation with INVS may down-regulate the canonical Wnt pathway and promote the Wnt-PCP pathway by regulating expression and subcellular location of disheveled proteins. Stabilizes protein levels of JADE1 and promotes its translocation to the nucleus leading to cooperative inhibition of canonical Wnt signaling. Acts as negative regulator of the hippo pathway by association with LATS1 and modifying LATS1-dependent phosphorylation and localization of WWTR1/TAZ. This Mus musculus (Mouse) protein is Nephrocystin-4 (Nphp4).